We begin with the raw amino-acid sequence, 120 residues long: Seripauperin-4 (120 aa).

The helical transmembrane segment at 7-24 threads the bilayer; the sequence is IAAGVAAIAATASATTTI.

The protein belongs to the SRP1/TIP1 family. Seripauperin subfamily.

It localises to the membrane. The protein is Seripauperin-4 (PAU4) of Saccharomyces cerevisiae (strain ATCC 204508 / S288c) (Baker's yeast).